The primary structure comprises 515 residues: Bifunctional purine biosynthesis protein PurH (515 aa).

Residues 1-145 (MTKRALISVS…KNHASVTVVV (145 aa)) enclose the MGS-like domain.

Belongs to the PurH family.

It carries out the reaction (6R)-10-formyltetrahydrofolate + 5-amino-1-(5-phospho-beta-D-ribosyl)imidazole-4-carboxamide = 5-formamido-1-(5-phospho-D-ribosyl)imidazole-4-carboxamide + (6S)-5,6,7,8-tetrahydrofolate. It catalyses the reaction IMP + H2O = 5-formamido-1-(5-phospho-D-ribosyl)imidazole-4-carboxamide. Its pathway is purine metabolism; IMP biosynthesis via de novo pathway; 5-formamido-1-(5-phospho-D-ribosyl)imidazole-4-carboxamide from 5-amino-1-(5-phospho-D-ribosyl)imidazole-4-carboxamide (10-formyl THF route): step 1/1. It participates in purine metabolism; IMP biosynthesis via de novo pathway; IMP from 5-formamido-1-(5-phospho-D-ribosyl)imidazole-4-carboxamide: step 1/1. In Streptococcus pyogenes serotype M6 (strain ATCC BAA-946 / MGAS10394), this protein is Bifunctional purine biosynthesis protein PurH.